The primary structure comprises 511 residues: Coiled-coil domain-containing protein 125 (511 aa).

Positions 1-12 are enriched in polar residues; it reads MSKVARSSSESD. Residues 1 to 110 form a disordered region; sequence MSKVARSSSE…TVDSNSELSN (110 aa). Positions 43–54 are enriched in basic and acidic residues; it reads EFSHRSRKRSDG. Over residues 83-108 the composition is skewed to polar residues; sequence QDTFPQVSRISNYRRQSSTVDSNSEL. 2 coiled-coil regions span residues 105-243 and 293-325; these read NSEL…LEAL and RMAA…MADA. Ser504 is subject to Phosphoserine.

It is found in the cytoplasm. May be involved in the regulation of cell migration. This is Coiled-coil domain-containing protein 125 (CCDC125) from Homo sapiens (Human).